An 88-amino-acid polypeptide reads, in one-letter code: Large ribosomal subunit protein bL27 (88 aa).

Polar residues predominate over residues 1–13 (MATKKGASSSSNG). The disordered stretch occupies residues 1–23 (MATKKGASSSSNGRDSEAKRLGV).

It belongs to the bacterial ribosomal protein bL27 family.

The chain is Large ribosomal subunit protein bL27 from Corynebacterium urealyticum (strain ATCC 43042 / DSM 7109).